The following is a 410-amino-acid chain: Chitinase-3-like protein 1 (410 aa).

The first 48 residues, Met-1 to Ala-48, serve as a signal peptide directing secretion. The GH18 domain occupies Tyr-49 to Thr-410. A disulfide bond links Cys-53 and Cys-78. Residue Asn-87 is glycosylated (N-linked (GlcNAc...) asparagine). Residues Glu-97–Trp-98, Gly-124–Asn-127, Tyr-168, Met-231–Asp-234, and Arg-290 contribute to the chitin site. Cysteines 327 and 391 form a disulfide. The segment at Gln-351 to Val-365 is important for AKT1 activation and IL8 production. Residue Trp-379 coordinates chitin.

Belongs to the glycosyl hydrolase 18 family. Monomer.

It is found in the secreted. Its subcellular location is the extracellular space. The protein localises to the cytoplasm. The protein resides in the perinuclear region. It localises to the endoplasmic reticulum. Its function is as follows. Carbohydrate-binding lectin with a preference for chitin. Has no chitinase activity. May play a role in tissue remodeling and in the capacity of cells to respond to and cope with changes in their environment. Plays a role in T-helper cell type 2 (Th2) inflammatory response and IL-13-induced inflammation, regulating allergen sensitization, inflammatory cell apoptosis, dendritic cell accumulation and M2 macrophage differentiation. Facilitates invasion of pathogenic enteric bacteria into colonic mucosa and lymphoid organs. Mediates activation of AKT1 signaling pathway and subsequent IL8 production in colonic epithelial cells. Regulates antibacterial responses in lung by contributing to macrophage bacterial killing, controlling bacterial dissemination and augmenting host tolerance. Also regulates hyperoxia-induced injury, inflammation and epithelial apoptosis in lung. This Pongo abelii (Sumatran orangutan) protein is Chitinase-3-like protein 1 (CHI3L1).